The chain runs to 113 residues: Parvalbumin beta (113 aa).

Alanine 1 carries the post-translational modification N-acetylalanine. S-linked (Glc) cysteine glycosylation occurs at cysteine 18. 2 consecutive EF-hand domains span residues phenylalanine 38–aspartate 73 and leucine 77–lysine 112. Residues aspartate 51, aspartate 53, glutamate 55, phenylalanine 57, glutamate 59, glutamate 62, aspartate 90, aspartate 92, aspartate 94, lysine 96, and glutamate 101 each coordinate Ca(2+).

Belongs to the parvalbumin family. Muscle (at protein level).

Functionally, in muscle, parvalbumin is thought to be involved in relaxation after contraction. It binds two calcium ions. This Gadus morhua subsp. callarias (Baltic cod) protein is Parvalbumin beta.